Consider the following 35-residue polypeptide: NSFCNLPAVVGRCKGYFPRYFYNTEAGKCQRFIYG.

Residues 4 to 35 form the BPTI/Kunitz inhibitor domain; it reads CNLPAVVGRCKGYFPRYFYNTEAGKCQRFIYG.

Belongs to the venom Kunitz-type family. Sea anemone type 2 potassium channel toxin subfamily.

The protein resides in the secreted. Its subcellular location is the nematocyst. In terms of biological role, dual-function toxin that inhibits both the serine protease trypsin and voltage-gated potassium channels (Kv). The protein is Kunitz-type proteinase inhibitor AEPI-III of Actinia equina (Beadlet anemone).